Reading from the N-terminus, the 55-residue chain is Large ribosomal subunit protein bL33 (55 aa).

It belongs to the bacterial ribosomal protein bL33 family.

The chain is Large ribosomal subunit protein bL33 from Renibacterium salmoninarum (strain ATCC 33209 / DSM 20767 / JCM 11484 / NBRC 15589 / NCIMB 2235).